Consider the following 286-residue polypeptide: ATP phosphoribosyltransferase (286 aa).

The protein belongs to the ATP phosphoribosyltransferase family. Long subfamily. Requires Mg(2+) as cofactor.

Its subcellular location is the cytoplasm. It carries out the reaction 1-(5-phospho-beta-D-ribosyl)-ATP + diphosphate = 5-phospho-alpha-D-ribose 1-diphosphate + ATP. The protein operates within amino-acid biosynthesis; L-histidine biosynthesis; L-histidine from 5-phospho-alpha-D-ribose 1-diphosphate: step 1/9. With respect to regulation, feedback inhibited by histidine. Its function is as follows. Catalyzes the condensation of ATP and 5-phosphoribose 1-diphosphate to form N'-(5'-phosphoribosyl)-ATP (PR-ATP). Has a crucial role in the pathway because the rate of histidine biosynthesis seems to be controlled primarily by regulation of HisG enzymatic activity. This is ATP phosphoribosyltransferase from Paenarthrobacter aurescens (strain TC1).